The primary structure comprises 157 residues: Ribosome maturation factor RimM (157 aa).

The PRC barrel domain maps to 89–156; the sequence is PGEYYHVDLI…DRLLIDPEFV (68 aa).

It belongs to the RimM family. As to quaternary structure, binds ribosomal protein uS19.

Its subcellular location is the cytoplasm. In terms of biological role, an accessory protein needed during the final step in the assembly of 30S ribosomal subunit, possibly for assembly of the head region. Essential for efficient processing of 16S rRNA. May be needed both before and after RbfA during the maturation of 16S rRNA. It has affinity for free ribosomal 30S subunits but not for 70S ribosomes. This chain is Ribosome maturation factor RimM, found in Rhizorhabdus wittichii (strain DSM 6014 / CCUG 31198 / JCM 15750 / NBRC 105917 / EY 4224 / RW1) (Sphingomonas wittichii).